The following is a 99-amino-acid chain: UPF0235 protein ASA_3628 (99 aa).

Belongs to the UPF0235 family.

This is UPF0235 protein ASA_3628 from Aeromonas salmonicida (strain A449).